We begin with the raw amino-acid sequence, 272 residues long: Cell shape-determining protein MreC (272 aa).

Topologically, residues 1–8 are cytoplasmic; it reads MNRFKKSK. A helical membrane pass occupies residues 9-29; that stretch reads YVIIVFVTVLLVSALLATTYS. The Extracellular segment spans residues 30–272; sequence STIVTKLGDG…VDVIELVGNS (243 aa). Residues 64–112 adopt a coiled-coil conformation; it reads LTRTYNENESLKKQLYQLEVKSNEVESLKTENEQLRQLLDMKSKLQATK.

It belongs to the MreC family. As to quaternary structure, homodimer. Interacts with a number of proteins in the elongasome, including PBP1a (pbpA), PBP1b, PBP2a, PBP2b (penA), StkP, MltG, MreD and RodZ.

Its subcellular location is the cell membrane. Functionally, involved in formation and maintenance of cell shape, probably part of the elongasome which synthesizes peripheral peptidoglycan (PG). The chain is Cell shape-determining protein MreC from Streptococcus pneumoniae (strain ATCC BAA-255 / R6).